The sequence spans 236 residues: 7-cyano-7-deazaguanine synthase (236 aa).

7–17 lines the ATP pocket; it reads CSGGLDSVSLA. 4 residues coordinate Zn(2+): Cys185, Cys193, Cys196, and Cys199.

This sequence belongs to the QueC family. The cofactor is Zn(2+).

It carries out the reaction 7-carboxy-7-deazaguanine + NH4(+) + ATP = 7-cyano-7-deazaguanine + ADP + phosphate + H2O + H(+). It participates in purine metabolism; 7-cyano-7-deazaguanine biosynthesis. Catalyzes the ATP-dependent conversion of 7-carboxy-7-deazaguanine (CDG) to 7-cyano-7-deazaguanine (preQ(0)). In Rhizobium meliloti (strain 1021) (Ensifer meliloti), this protein is 7-cyano-7-deazaguanine synthase.